The chain runs to 202 residues: Holliday junction branch migration complex subunit RuvA (202 aa).

The interval 1-64 is domain I; that stretch reads MISRLRGTVL…EDAFDLFGFL (64 aa). Positions 65 to 143 are domain II; that stretch reads TKGEEEVFLL…TIHLEAVSRG (79 aa). The interval 143 to 147 is flexible linker; the sequence is GTAPA. The interval 148–202 is domain III; that stretch reads AVSGAHADLVSALLNLGYKQPQAEKAADLASERLGAEATFQALFREALKALRSGG.

Belongs to the RuvA family. As to quaternary structure, homotetramer. Forms an RuvA(8)-RuvB(12)-Holliday junction (HJ) complex. HJ DNA is sandwiched between 2 RuvA tetramers; dsDNA enters through RuvA and exits via RuvB. An RuvB hexamer assembles on each DNA strand where it exits the tetramer. Each RuvB hexamer is contacted by two RuvA subunits (via domain III) on 2 adjacent RuvB subunits; this complex drives branch migration. In the full resolvosome a probable DNA-RuvA(4)-RuvB(12)-RuvC(2) complex forms which resolves the HJ.

It is found in the cytoplasm. Its function is as follows. The RuvA-RuvB-RuvC complex processes Holliday junction (HJ) DNA during genetic recombination and DNA repair, while the RuvA-RuvB complex plays an important role in the rescue of blocked DNA replication forks via replication fork reversal (RFR). RuvA specifically binds to HJ cruciform DNA, conferring on it an open structure. The RuvB hexamer acts as an ATP-dependent pump, pulling dsDNA into and through the RuvAB complex. HJ branch migration allows RuvC to scan DNA until it finds its consensus sequence, where it cleaves and resolves the cruciform DNA. The sequence is that of Holliday junction branch migration complex subunit RuvA from Myxococcus xanthus (strain DK1622).